Here is a 511-residue protein sequence, read N- to C-terminus: Early growth response protein 1 (511 aa).

Disordered regions lie at residues 133-169 (ASIPSSTSQATHPSSSSTSSIPSSSSSSTSSASLSCS) and 291-312 (PSRMRKYPNRPSKTPPHERPYA). Over residues 137–169 (SSTSQATHPSSSSTSSIPSSSSSSTSSASLSCS) the composition is skewed to low complexity. C2H2-type zinc fingers lie at residues 311-335 (YACPVETCDRRFSRSDELTRHIRIH), 341-363 (FQCRICMRNFSRSDHLTTHIRTH), and 369-391 (FACEICGRKFARSDERKRHTKIH). A disordered region spans residues 384-406 (RKRHTKIHMRQKDKKAEKGATAA). The span at 386–396 (RHTKIHMRQKD) shows a compositional bias: basic residues.

Belongs to the EGR C2H2-type zinc-finger protein family. As to expression, detected in muscle and brain.

The protein resides in the nucleus. It localises to the cytoplasm. Transcriptional regulator. Recognizes and binds to the DNA sequence 5'-GCG(T/G)GGGCG-3'(EGR-site) in the promoter region of target genes. Binds double-stranded target DNA, irrespective of the cytosine methylation status. Regulates the transcription of numerous target genes, and thereby plays an important role in regulating the response to growth factors, DNA damage, and ischemia. Plays a role in the regulation of cell survival, proliferation and cell death. Mediates responses to ischemia and hypoxia; regulates the expression of proteins that are involved in inflammatory processes. Plays a role in regulating the expression of circadian clock genes. Plays a role in the organization of Muller glia cells in the inner and outer plexiform layers of the retina. The polypeptide is Early growth response protein 1 (egr1) (Danio rerio (Zebrafish)).